Reading from the N-terminus, the 225-residue chain is Uracil-DNA glycosylase (225 aa).

Residue Asp-68 is the Proton acceptor of the active site.

This sequence belongs to the uracil-DNA glycosylase (UDG) superfamily. UNG family.

It localises to the cytoplasm. The catalysed reaction is Hydrolyzes single-stranded DNA or mismatched double-stranded DNA and polynucleotides, releasing free uracil.. Functionally, excises uracil residues from the DNA which can arise as a result of misincorporation of dUMP residues by DNA polymerase or due to deamination of cytosine. This chain is Uracil-DNA glycosylase, found in Parafrankia sp. (strain EAN1pec).